Here is a 1037-residue protein sequence, read N- to C-terminus: MDLNRIIQALKGTIDPKLRIAAENELNQSYKIINFAPSLLRIIVSDHVEFPVRQAAAIYLKNMVTQYWPDREPPPGEAIFPFNIHENDRQQIRDNIVEGIIRSPDLVRVQLTMCLRAIIKHDFPGHWPGVVDKIDYYLQSQSSASWLGSLLCLYQLVKTYEYKKAEEREPLIIAMQIFLPRIQQQIVQLLPDSSYYSVLLQKQILKIFYALVQYALPLQLVNNQTMTTWMEIFRTIIDRTVPPETLHIDEDDRPELVWWKCKKWALHIVARLFERYGSPGNVTKEYFEFSEFFLKTYAVGIQQVLLKILDQYRQKEYVAPRVLQQAFNYLNQGVVHSITWKQMKPHIQNISEDVIFSVMCYKDEDEELWQEDPYEYIRMKFDIFEDYASPTTAAQTLLYTAAKKRKEVLPKMMAFCYQILTDPNFDPRKKDGALHVIGSLAEILLKKSLFKDQMELFLQNHVFPLLLSNLGYLRARSCWVLHAFSSLKFHNELNLRNAVELAKKSLIEDKEMPVKVEAALALQSLISNQIQAKEYMKPHVRPIMQELLHIVRETENDDVTNVIQKMICEYSQEVASIAVDMTQHLAEIFGKVLQSDEYEEVEDKTVMAMGILHTIDTILTVVEDHKEITQQLENICLRIIDLVLQKHVIEFYEEILSLAYSLTCHSISPQMWQLLGILYEVFQQDCFEYFTDMMPLLHNYVTIDTDTLLSNAKHLEILFTMCRKVLCGDAGEDAECHAAKLLEVIILQCKGRGIDQCIPLFVQLVLERLTRGVKTSELRTMCLQVAIAALYYNPDLLLHTLERIQLPHNPGPITVQFINQWMNDTDCFLGHHDRKMCIIGLSILLELQNRPPAVDAVVGQIVPSILFLFLGLKQVCATRQLVNREDRSKAEKADMEENEEISSDEEETNVTAQAMQSNNGRGEDEEEEDDDWDEEVLEETALEGFSTPLDLDNSVDEYQFFTQALITVQSRDAAWYQLLMAPLSEDQRTALQEVYTLAEHRRTVAEAKKKIEQQGGFTFENKGVLSAFNFGTVPSNN.

Residues 22–102 (AENELNQSYK…RDNIVEGIIR (81 aa)) enclose the Importin N-terminal domain. Residues 886-895 (DRSKAEKADM) show a composition bias toward basic and acidic residues. The disordered stretch occupies residues 886-934 (DRSKAEKADMEENEEISSDEEETNVTAQAMQSNNGRGEDEEEEDDDWDE). Over residues 896-908 (EENEEISSDEEET) the composition is skewed to acidic residues. Phosphoserine occurs at positions 902 and 903. Over residues 909-920 (NVTAQAMQSNNG) the composition is skewed to polar residues. A compositionally biased stretch (acidic residues) spans 923-934 (EDEEEEDDDWDE).

Belongs to the importin beta family. Forms a heterodimer with KPNB1. Interacts with SRP19. Interacts with RPL23A. Binds directly to nuclear pore complexes. Interacts with LRPPRC; the interaction occurs when LRPPRC is in its RNA-free form and promotes import of LRPPRC to the nucleus to allow for EIF4E-mediated export of mRNAS from the nucleus to the cytoplasm.

It is found in the cytoplasm. The protein resides in the nucleus. Functionally, involved in nuclear protein import, either by acting as autonomous nuclear transport receptor or as an adapter-like protein in association with the importin-beta subunit KPNB1. Acting autonomously, may serve as receptor for nuclear localization signals (NLS) and promote translocation of import substrates through the nuclear pore complex (NPC) by an energy requiring, Ran-dependent mechanism. At the nucleoplasmic side of the NPC, Ran binds to importin, the importin/substrate complex dissociates and importin is re-exported from the nucleus to the cytoplasm where GTP hydrolysis releases Ran. The directionality of nuclear import is thought to be conferred by an asymmetric distribution of the GTP- and GDP-bound forms of Ran between the cytoplasm and nucleus. In vitro mediates the nuclear import of the signal recognition particle protein SRP19. May also be involved in cytoplasm-to-nucleus shuttling of a broad spectrum of other cargos, including Argonaute-microRNAs complexes, the JUN protein, RELA/NF-kappa-B p65 subunit, the translation initiation factor EIF4E and a set of receptor-activated mothers against decapentaplegic homolog (SMAD) transcription factors that play a critical role downstream of the large family of transforming growth factor beta and bone morphogenetic protein (BMP) cytokines. This Homo sapiens (Human) protein is Importin-8 (IPO8).